We begin with the raw amino-acid sequence, 265 residues long: UPF0354 protein GTNG_2723 (265 aa).

The protein belongs to the UPF0354 family.

The polypeptide is UPF0354 protein GTNG_2723 (Geobacillus thermodenitrificans (strain NG80-2)).